The sequence spans 413 residues: F-box protein CPR1 (413 aa).

An F-box domain is found at 1-48 (MATIPMDIVNDIFLRLPAKTLVRCRALSKPCYHLINDPDFIESHLHRV).

As to quaternary structure, part of a SCF (ASK-cullin-F-box) protein ligase complex. Interacts with SKP1A/ASK1, SPK1B/ASK2, ASK9, ASK10, ASK11, ASK13, ASK14, ASK16, ASK17, ASK18 and ASK19. Interacts with TRAF1B. In terms of tissue distribution, expressed in seedling, root, stem, leaves, inflorescence and silique, especially in veins and trichomes.

Its subcellular location is the cytoplasm. It localises to the nucleus. It participates in protein modification; protein ubiquitination. Functionally, component of SCF(ASK-cullin-F-box) E3 ubiquitin ligase complexes, which may mediate the ubiquitination and subsequent proteasomal degradation of target proteins. Regulates negatively both salicylic acid (SA)-dependent and SA-independent defense signaling. In Arabidopsis thaliana (Mouse-ear cress), this protein is F-box protein CPR1 (CPR1).